The chain runs to 197 residues: MRTATIKRKTKETDIEVTVNLDGTGVSNIATGIGFFDHMLDLLARHSRIDLTVKAVGDLHIDHHHTTEDTGIALGQAVKQALGTMAGITRYAGVHMPMDETLSRVVIDISGRPVLVFKVDFPRDKIGEFDTELVREWFQAFAMNASVTLHVETLYGDNSHHIAESCFKGLARALRAAVAIDPKAAGEIPSTKGSLGG.

The protein belongs to the imidazoleglycerol-phosphate dehydratase family.

It localises to the cytoplasm. It carries out the reaction D-erythro-1-(imidazol-4-yl)glycerol 3-phosphate = 3-(imidazol-4-yl)-2-oxopropyl phosphate + H2O. Its pathway is amino-acid biosynthesis; L-histidine biosynthesis; L-histidine from 5-phospho-alpha-D-ribose 1-diphosphate: step 6/9. In Bradyrhizobium diazoefficiens (strain JCM 10833 / BCRC 13528 / IAM 13628 / NBRC 14792 / USDA 110), this protein is Imidazoleglycerol-phosphate dehydratase.